The sequence spans 645 residues: L-aspartate oxidase, chloroplastic (645 aa).

The N-terminal 70 residues, 1–70, are a transit peptide targeting the chloroplast; sequence MAALMNGFGS…RMRHKVGSIR (70 aa). FAD is bound by residues 92-95, Lys114, 121-128, and Asp292; these read SGVA and NTNYAQGG. The active-site Proton donor/acceptor is Arg368. Residues Glu453 and 469 to 470 contribute to the FAD site; that span reads SL.

Belongs to the FAD-dependent oxidoreductase 2 family. NadB subfamily. FAD is required as a cofactor.

It localises to the plastid. Its subcellular location is the chloroplast. The enzyme catalyses L-aspartate + O2 = iminosuccinate + H2O2. Its pathway is cofactor biosynthesis; NAD(+) biosynthesis; iminoaspartate from L-aspartate (oxidase route): step 1/1. Catalyzes the oxidation of L-aspartate to iminoaspartate. The chain is L-aspartate oxidase, chloroplastic from Oryza sativa subsp. japonica (Rice).